Here is a 72-residue protein sequence, read N- to C-terminus: Crustacean hyperglycemic hormone (72 aa).

A Pyrrolidone carboxylic acid; partial modification is found at Gln-1. Intrachain disulfides connect Cys-7–Cys-43, Cys-23–Cys-39, and Cys-26–Cys-52. Residue Val-72 is modified to Valine amide.

The protein belongs to the arthropod CHH/MIH/GIH/VIH hormone family. Post-translationally, the N-terminus forms pyrrolidone carboxylic acid in isoform CHH-II and is free in isoform CHH-I. As to expression, produced by the medulla terminalis X-organ in the eyestalks and transported to the sinus gland where they are stored and released.

It is found in the secreted. Functionally, hormone found in the sinus gland of isopods and decapods which controls the blood sugar level. Has a secretagogue action over the amylase released from the midgut gland. May act as a stress hormone and may be involved in the control of molting and reproduction. The polypeptide is Crustacean hyperglycemic hormone (Cancer pagurus (Rock crab)).